Consider the following 945-residue polypeptide: Isoleucine--tRNA ligase (945 aa).

Over residues 1-10 (MSNKKADSKP) the composition is skewed to basic and acidic residues. Residues 1-21 (MSNKKADSKPQAKYPVNLLDT) form a disordered region. Residues 66–76 (PYANGDIHLGH) carry the 'HIGH' region motif. L-isoleucyl-5'-AMP is bound at residue Glu-581. The short motif at 622-626 (KMSKS) is the 'KMSKS' region element. Residue Lys-625 coordinates ATP. The Zn(2+) site is built by Cys-908, Cys-911, Cys-928, and Cys-931.

It belongs to the class-I aminoacyl-tRNA synthetase family. IleS type 1 subfamily. In terms of assembly, monomer. It depends on Zn(2+) as a cofactor.

Its subcellular location is the cytoplasm. The enzyme catalyses tRNA(Ile) + L-isoleucine + ATP = L-isoleucyl-tRNA(Ile) + AMP + diphosphate. Its function is as follows. Catalyzes the attachment of isoleucine to tRNA(Ile). As IleRS can inadvertently accommodate and process structurally similar amino acids such as valine, to avoid such errors it has two additional distinct tRNA(Ile)-dependent editing activities. One activity is designated as 'pretransfer' editing and involves the hydrolysis of activated Val-AMP. The other activity is designated 'posttransfer' editing and involves deacylation of mischarged Val-tRNA(Ile). The polypeptide is Isoleucine--tRNA ligase (Burkholderia multivorans (strain ATCC 17616 / 249)).